A 453-amino-acid chain; its full sequence is Probable exopolygalacturonase B (453 aa).

Positions 1-16 (MKFFALAALFASTVNS) are cleaved as a signal peptide. N185 and N225 each carry an N-linked (GlcNAc...) asparagine glycan. Residue D255 is the Proton donor of the active site. An intrachain disulfide couples C257 to C274. N-linked (GlcNAc...) asparagine glycosylation is found at N263 and N275. The active site involves H278. PbH1 repeat units lie at residues 295–316 (IENVWIENVTLLNGENGARLKA) and 327–348 (INNVTYKNIHVENTDNPIVLDQ). N302, N329, N354, and N366 each carry an N-linked (GlcNAc...) asparagine glycan. One copy of the PbH1 3 repeat lies at 362–405 (PSRVNFTNIVFEDIYGTSSGKRGKVVADLTCSPNAVCSGIRLKN). An intrachain disulfide couples C392 to C398. A glycan (N-linked (GlcNAc...) asparagine) is linked at N436.

The protein belongs to the glycosyl hydrolase 28 family.

The protein resides in the secreted. It catalyses the reaction [(1-&gt;4)-alpha-D-galacturonosyl](n) + H2O = alpha-D-galacturonate + [(1-&gt;4)-alpha-D-galacturonosyl](n-1). Specific in hydrolyzing the terminal glycosidic bond of polygalacturonic acid and oligogalacturonates. The protein is Probable exopolygalacturonase B (pgxB) of Aspergillus fumigatus (strain CBS 144.89 / FGSC A1163 / CEA10) (Neosartorya fumigata).